The chain runs to 398 residues: tRNA-specific 2-thiouridylase MnmA (398 aa).

ATP-binding positions include 18–25 and Leu-44; that span reads AMSGGVDS. The active-site Nucleophile is the Cys-112. A disulfide bond links Cys-112 and Cys-213. Gly-136 provides a ligand contact to ATP. The tract at residues 163–165 is interaction with tRNA; sequence RDQ. Cys-213 (cysteine persulfide intermediate) is an active-site residue.

It belongs to the MnmA/TRMU family.

Its subcellular location is the cytoplasm. It carries out the reaction S-sulfanyl-L-cysteinyl-[protein] + uridine(34) in tRNA + AH2 + ATP = 2-thiouridine(34) in tRNA + L-cysteinyl-[protein] + A + AMP + diphosphate + H(+). Functionally, catalyzes the 2-thiolation of uridine at the wobble position (U34) of tRNA, leading to the formation of s(2)U34. The sequence is that of tRNA-specific 2-thiouridylase MnmA from Rhizobium meliloti (strain 1021) (Ensifer meliloti).